A 322-amino-acid chain; its full sequence is Mas-related G-protein coupled receptor member X3 (322 aa).

Topologically, residues Met1–Thr31 are extracellular. A helical membrane pass occupies residues Val32–Leu52. At Gly53–Ala60 the chain is on the cytoplasmic side. Residues Val61–Val81 traverse the membrane as a helical segment. The Extracellular segment spans residues Arg82 to Lys96. A helical membrane pass occupies residues Ile97 to Ser117. Residues Thr118–Ser139 are Cytoplasmic-facing. A helical membrane pass occupies residues Val140–Phe160. Residues Cys161–Asp177 are Extracellular-facing. The chain crosses the membrane as a helical span at residues Phe178–Leu198. Over Leu199–Arg213 the chain is Cytoplasmic. The chain crosses the membrane as a helical span at residues Leu214–Ile234. The Extracellular segment spans residues Gln235–His254. The helical transmembrane segment at Leu255–Val275 threads the bilayer. At Gly276 to Gln322 the chain is on the cytoplasmic side.

The protein belongs to the G-protein coupled receptor 1 family. Mas subfamily.

It is found in the cell membrane. Orphan receptor. Probably involved in the function of nociceptive neurons. May regulate nociceptor function and/or development, including the sensation or modulation of pain. Potently activated by enkephalins. This is Mas-related G-protein coupled receptor member X3 (MRGPRX3) from Macaca mulatta (Rhesus macaque).